Consider the following 210-residue polypeptide: Chaperone protein TorD (210 aa).

It belongs to the TorD/DmsD family. TorD subfamily.

It localises to the cytoplasm. Functionally, involved in the biogenesis of TorA. Acts on TorA before the insertion of the molybdenum cofactor and, as a result, probably favors a conformation of the apoenzyme that is competent for acquiring the cofactor. This is Chaperone protein TorD from Salmonella newport (strain SL254).